Here is a 506-residue protein sequence, read N- to C-terminus: Probable UTP--glucose-1-phosphate uridylyltransferase (506 aa).

A phosphoserine mark is found at Ser-15 and Ser-17. UTP contacts are provided by residues Leu-115–Gly-118, Lys-129, Gln-192, and Gly-221. Substrate is bound at residue Gly-117 to Gly-118. Lys-129 is a binding site for Mg(2+). Substrate contacts are provided by residues His-222 and Asn-250–Asp-252. Asp-252 and Lys-394 together coordinate UTP. Position 252 (Asp-252) interacts with Mg(2+). Lys-394 is a catalytic residue. An oligomerization region spans residues His-455–His-506.

It belongs to the UDPGP type 1 family. Homooctamer.

Its subcellular location is the cytoplasm. It localises to the nucleus. The catalysed reaction is alpha-D-glucose 1-phosphate + UTP + H(+) = UDP-alpha-D-glucose + diphosphate. In terms of biological role, plays a central role as a glucosyl donor in cellular metabolic pathways. This is Probable UTP--glucose-1-phosphate uridylyltransferase (fyu1) from Schizosaccharomyces pombe (strain 972 / ATCC 24843) (Fission yeast).